The primary structure comprises 491 residues: Nucleoporin NUP42 (491 aa).

A C3H1-type zinc finger spans residues 1–25 (MAICNFFLQGRCRYGEKCWNEHPRG). Disordered regions lie at residues 23 to 82 (PRGG…SQRY) and 92 to 111 (TTWINRDSEKPSAGSFSGFG). Polar residues predominate over residues 33 to 64 (RYQSQNRYQEQSRYQEQSRYPEQSRYPEQNRY). FG repeat units lie at residues 110–111 (FG), 259–260 (FG), 302–303 (FG), 312–313 (FG), 333–334 (FG), 342–343 (FG), 363–364 (FG), 375–376 (FG), 379–380 (FG), and 410–411 (FG).

As to quaternary structure, probable component of the nuclear pore complex (NPC).

The protein localises to the nucleus. It localises to the nuclear pore complex. Its subcellular location is the nucleus membrane. Its function is as follows. Required for the export of mRNAs containing poly(A) tails from the nucleus into the cytoplasm. The protein is Nucleoporin NUP42 (nup42) of Xenopus laevis (African clawed frog).